A 173-amino-acid chain; its full sequence is Crossover junction endodeoxyribonuclease RuvC (173 aa).

Active-site residues include Asp8, Glu67, and Asp139. Positions 8, 67, and 139 each coordinate Mg(2+).

The protein belongs to the RuvC family. As to quaternary structure, homodimer which binds Holliday junction (HJ) DNA. The HJ becomes 2-fold symmetrical on binding to RuvC with unstacked arms; it has a different conformation from HJ DNA in complex with RuvA. In the full resolvosome a probable DNA-RuvA(4)-RuvB(12)-RuvC(2) complex forms which resolves the HJ. It depends on Mg(2+) as a cofactor.

The protein resides in the cytoplasm. The catalysed reaction is Endonucleolytic cleavage at a junction such as a reciprocal single-stranded crossover between two homologous DNA duplexes (Holliday junction).. Its function is as follows. The RuvA-RuvB-RuvC complex processes Holliday junction (HJ) DNA during genetic recombination and DNA repair. Endonuclease that resolves HJ intermediates. Cleaves cruciform DNA by making single-stranded nicks across the HJ at symmetrical positions within the homologous arms, yielding a 5'-phosphate and a 3'-hydroxyl group; requires a central core of homology in the junction. The consensus cleavage sequence is 5'-(A/T)TT(C/G)-3'. Cleavage occurs on the 3'-side of the TT dinucleotide at the point of strand exchange. HJ branch migration catalyzed by RuvA-RuvB allows RuvC to scan DNA until it finds its consensus sequence, where it cleaves and resolves the cruciform DNA. This is Crossover junction endodeoxyribonuclease RuvC from Aliivibrio fischeri (strain ATCC 700601 / ES114) (Vibrio fischeri).